A 98-amino-acid polypeptide reads, in one-letter code: NADH-ubiquinone oxidoreductase chain 4L (98 aa).

Helical transmembrane passes span 1–21, 29–49, and 61–81; these read MSMV…GLLM, SLLC…VTIL, and IILL…LVMV.

Belongs to the complex I subunit 4L family. Core subunit of respiratory chain NADH dehydrogenase (Complex I) which is composed of 45 different subunits.

Its subcellular location is the mitochondrion inner membrane. The catalysed reaction is a ubiquinone + NADH + 5 H(+)(in) = a ubiquinol + NAD(+) + 4 H(+)(out). Functionally, core subunit of the mitochondrial membrane respiratory chain NADH dehydrogenase (Complex I) which catalyzes electron transfer from NADH through the respiratory chain, using ubiquinone as an electron acceptor. Part of the enzyme membrane arm which is embedded in the lipid bilayer and involved in proton translocation. The chain is NADH-ubiquinone oxidoreductase chain 4L (MT-ND4L) from Halichoerus grypus (Gray seal).